Here is a 615-residue protein sequence, read N- to C-terminus: Fibrinogen alpha chain (615 aa).

The signal sequence occupies residues 1-19 (MFSVRDLCLVLSLVGAIKT). The stretch at 71–602 (CRMKGLIDEV…GHTKARPARG (532 aa)) forms a coiled coil. A disordered region spans residues 267 to 427 (FGGDGHARGD…TKQEFHTGKL (161 aa)). Over residues 293–302 (GTSSIGNVNP) the composition is skewed to polar residues. T325 carries O-linked (GalNAc...) threonine glycosylation. Over residues 373–396 (GSAGTWNTGSSGSSSFRPDSSGHG) the composition is skewed to low complexity. C455 and C485 are disulfide-bonded. Residues 530-615 (EFAALGESGS…SPLGEPSLTP (86 aa)) form a disordered region. Positions 537-549 (SGSSSSKTSTHSK) are enriched in low complexity. Over residues 550 to 560 (QFVSSSTTVNR) the composition is skewed to polar residues. Residues 591–601 (QKGHTKARPAR) are compositionally biased toward basic residues.

In terms of assembly, heterohexamer; disulfide linked. Contains 2 sets of 3 non-identical chains (alpha, beta and gamma). The 2 heterotrimers are in head to head conformation with the N-termini in a small central domain. Post-translationally, conversion of fibrinogen to fibrin is triggered by thrombin, which cleaves fibrinopeptides A and B from alpha and beta chains, and thus exposes the N-terminal polymerization sites responsible for the formation of the soft clot. The soft clot is converted into the hard clot by factor XIIIA which catalyzes the epsilon-(gamma-glutamyl)lysine cross-linking between gamma chains (stronger) and between alpha chains (weaker) of different monomers. Forms F13A-mediated cross-links between a glutamine and the epsilon-amino group of a lysine residue, forming fibronectin-fibrinogen heteropolymers.

The protein resides in the secreted. Its function is as follows. Cleaved by the protease thrombin to yield monomers which, together with fibrinogen beta (FGB) and fibrinogen gamma (FGG), polymerize to form an insoluble fibrin matrix. Fibrin has a major function in hemostasis as one of the primary components of blood clots. In addition, functions during the early stages of wound repair to stabilize the lesion and guide cell migration during re-epithelialization. Was originally thought to be essential for platelet aggregation, based on in vitro studies using anticoagulated blood. However, subsequent studies have shown that it is not absolutely required for thrombus formation in vivo. Enhances expression of SELP in activated platelets via an ITGB3-dependent pathway. Maternal fibrinogen is essential for successful pregnancy. Fibrin deposition is also associated with infection, where it protects against IFNG-mediated hemorrhage. May also facilitate the immune response via both innate and T-cell mediated pathways. This is Fibrinogen alpha chain (FGA) from Bos taurus (Bovine).